A 288-amino-acid polypeptide reads, in one-letter code: HTH-type transcriptional regulator CzcR (288 aa).

In terms of domain architecture, HTH lysR-type spans 1–58 (MELRDLQIFKCVAHHKSITGAAKELNYVQSNVTARIKQLENELKTPLFNRHKKGVSLS). Residues 18-37 (ITGAAKELNYVQSNVTARIK) constitute a DNA-binding region (H-T-H motif).

It belongs to the LysR transcriptional regulatory family.

This chain is HTH-type transcriptional regulator CzcR (czcR), found in Bacillus subtilis (strain 168).